The following is a 325-amino-acid chain: 5-dehydro-2-deoxygluconokinase (325 aa).

The protein belongs to the carbohydrate kinase PfkB family.

The enzyme catalyses 5-dehydro-2-deoxy-D-gluconate + ATP = 6-phospho-5-dehydro-2-deoxy-D-gluconate + ADP + H(+). Its pathway is polyol metabolism; myo-inositol degradation into acetyl-CoA; acetyl-CoA from myo-inositol: step 5/7. In terms of biological role, catalyzes the phosphorylation of 5-dehydro-2-deoxy-D-gluconate (2-deoxy-5-keto-D-gluconate or DKG) to 6-phospho-5-dehydro-2-deoxy-D-gluconate (DKGP). The polypeptide is 5-dehydro-2-deoxygluconokinase (Listeria monocytogenes serotype 4a (strain HCC23)).